Consider the following 294-residue polypeptide: Glycine-rich protein 2 (294 aa).

The N-terminal stretch at 1–20 is a signal peptide; sequence MKMWFRLATFVTLIIEFAHC. Residues 205–221 show a composition bias toward low complexity; that stretch reads TGSQTGAAANGTSAGAA. The disordered stretch occupies residues 205–225; the sequence is TGSQTGAAANGTSAGAAVRGG.

As to expression, nacreous layer of shell (at protein level). Expressed primarily in the mantle with highest level in the mantle pallium and lower level in the mantle edge.

It is found in the secreted. The sequence is that of Glycine-rich protein 2 from Pinctada maxima (Silver-lipped pearl oyster).